The following is a 137-amino-acid chain: Nucleoside diphosphate kinase (137 aa).

ATP-binding residues include Lys-9, Phe-57, Arg-85, Thr-91, Arg-102, and Asn-112. The active-site Pros-phosphohistidine intermediate is the His-115.

Belongs to the NDK family. Homotetramer. It depends on Mg(2+) as a cofactor.

It localises to the cytoplasm. It carries out the reaction a 2'-deoxyribonucleoside 5'-diphosphate + ATP = a 2'-deoxyribonucleoside 5'-triphosphate + ADP. The catalysed reaction is a ribonucleoside 5'-diphosphate + ATP = a ribonucleoside 5'-triphosphate + ADP. Major role in the synthesis of nucleoside triphosphates other than ATP. The ATP gamma phosphate is transferred to the NDP beta phosphate via a ping-pong mechanism, using a phosphorylated active-site intermediate. This is Nucleoside diphosphate kinase from Campylobacter jejuni subsp. jejuni serotype O:23/36 (strain 81-176).